Consider the following 503-residue polypeptide: ATP synthase subunit alpha (503 aa).

Residue 169-176 (GDRKTGKT) coordinates ATP.

The protein belongs to the ATPase alpha/beta chains family. F-type ATPases have 2 components, CF(1) - the catalytic core - and CF(0) - the membrane proton channel. CF(1) has five subunits: alpha(3), beta(3), gamma(1), delta(1), epsilon(1). CF(0) has three main subunits: a(1), b(2) and c(9-12). The alpha and beta chains form an alternating ring which encloses part of the gamma chain. CF(1) is attached to CF(0) by a central stalk formed by the gamma and epsilon chains, while a peripheral stalk is formed by the delta and b chains.

It localises to the cell membrane. The catalysed reaction is ATP + H2O + 4 H(+)(in) = ADP + phosphate + 5 H(+)(out). Its function is as follows. Produces ATP from ADP in the presence of a proton gradient across the membrane. The alpha chain is a regulatory subunit. The polypeptide is ATP synthase subunit alpha (Lactobacillus johnsonii (strain CNCM I-12250 / La1 / NCC 533)).